The sequence spans 229 residues: Histone H1 (229 aa).

2 disordered regions span residues Met-1 to Pro-52 and Ala-125 to Lys-229. A compositionally biased stretch (basic residues) spans Lys-32–Ser-45. The H15 domain occupies Ser-50–Ser-119. Over residues Ala-125–Lys-138 the composition is skewed to low complexity. Basic residues predominate over residues Val-139–Ala-160. 2 stretches are compositionally biased toward low complexity: residues Lys-161 to Lys-177 and Lys-185 to Pro-205. Positions Gly-206 to Lys-229 are enriched in basic residues.

The protein belongs to the histone H1/H5 family.

It localises to the nucleus. The protein resides in the chromosome. Its function is as follows. Histones H1 are necessary for the condensation of nucleosome chains into higher-order structures. The polypeptide is Histone H1 (Euphorbia esula (Leafy spurge)).